The chain runs to 765 residues: MSADASTTPAADSNVTSTPETSTTPAAPAPEVTAVESTTAPNASQPHSASLYVGELDPSVTEAMLYELFSSIGQVASIRVCRDAVTRRSLGYAYVNYNNTADGERALEDLNYTLIKGKPCRIMWSQRDPALRKTGQGNVFIKNLDSAIDNKALHDTFAAFGNILSCKVAQDEFGNSKGYGFVHYETAEAANNAIKHVNGMLLNDKKVFVGHHISKKDRQSKFEEMKANFTNVYIKNIDQDVTEEEFRELFEKFGEITSATLSRDQEGKSRGFGFVNFSTHESAQAAVDEMNEKEIRTQKLYVGRAQKKHEREEELRKQYEAARLEKASKYQGVNLYVKNLTDDVDDEKLRELFGPYGTITSAKVMRDTNIERTQTPESDKEKENKEATKENEKESSEAEKAEKTEEKPADSGDEKKEDKESKKADKKGLGKSKGFGFVCFSSPDEASKAVTEMNQRMVNGKPLYVALAQRKDVRRSQLEASIQARNTIRQQQAAAAAGMPQPYMQPAVFYGPGQQGFIPGQRGGIAFPPQPGMVMAGIPGGRPGQYPGPFPGQQGGRGMGPNQQLPPNFQGIPMGAMQGPVPNGMGYPQGMAQVQFGRGAGGRGQVPGMPNMGQGMRGPGYGQGRGGVPVQQGQMRPGQGGRGQNAAQAPAGRPEEAVAGGLTAQALSAAPPPQQKQMLGEALYPKIQAQQPELAGKITGMLLEMENTELLSLLEDEEALRAKVDEALNVYDEYMKNKGGESEATGEAAKPKEAAKETSTEENKS.

A compositionally biased stretch (low complexity) spans 1–37 (MSADASTTPAADSNVTSTPETSTTPAAPAPEVTAVES). Positions 1–49 (MSADASTTPAADSNVTSTPETSTTPAAPAPEVTAVESTTAPNASQPHSA) are disordered. A compositionally biased stretch (polar residues) spans 38-48 (TTAPNASQPHS). 4 RRM domains span residues 49 to 127 (ASLY…WSQR), 137 to 214 (GNVF…HHIS), 230 to 307 (TNVY…RAQK), and 333 to 470 (VNLY…LAQR). Disordered regions lie at residues 364–427 (VMRD…ADKK) and 619–657 (PGYGQGRGGVPVQQGQMRPGQGGRGQNAAQAPAGRPEEA). The span at 377–427 (ESDKEKENKEATKENEKESSEAEKAEKTEEKPADSGDEKKEDKESKKADKK) shows a compositional bias: basic and acidic residues. A compositionally biased stretch (low complexity) spans 628 to 637 (VPVQQGQMRP). Residues 659 to 736 (AGGLTAQALS…ALNVYDEYMK (78 aa)) enclose the PABC domain. Positions 737 to 765 (NKGGESEATGEAAKPKEAAKETSTEENKS) are disordered. Positions 749–765 (AKPKEAAKETSTEENKS) are enriched in basic and acidic residues.

The protein belongs to the polyadenylate-binding protein type-1 family.

It localises to the cytoplasm. Its subcellular location is the nucleus. In terms of biological role, binds the poly(A) tail of mRNA. Appears to be an important mediator of the multiple roles of the poly(A) tail in mRNA biogenesis, stability and translation. In the nucleus, involved in both mRNA cleavage and polyadenylation. Is also required for efficient mRNA export to the cytoplasm. Acts in concert with a poly(A)-specific nuclease (PAN) to affect poly(A) tail shortening, which may occur concomitantly with either nucleocytoplasmic mRNA transport or translational initiation. In the cytoplasm, stimulates translation initiation and regulates mRNA decay through translation termination-coupled poly(A) shortening, probably mediated by PAN. This Aspergillus oryzae (strain ATCC 42149 / RIB 40) (Yellow koji mold) protein is Polyadenylate-binding protein, cytoplasmic and nuclear (pab1).